A 1348-amino-acid polypeptide reads, in one-letter code: Adhesion G protein-coupled receptor F5 (1348 aa).

An N-terminal signal peptide occupies residues 1–21 (MRSPRTFTFYFLLLVICSSEA). Residues 22-1019 (ALSTPTEPIV…LKILLDIISY (998 aa)) lie on the Extracellular side of the membrane. The 109-residue stretch at 163–271 (PEAFITLKLK…NSFQGTPSNE (109 aa)) folds into the SEA domain. Ig-like domains lie at 268–366 (PSNE…LDVT), 367–464 (PIRI…IAVT), and 469–559 (ANLT…KDVT). N-linked (GlcNAc...) asparagine glycosylation is found at N270, N286, N337, and N349. A disulfide bridge links C291 with C348. C389 and C447 are joined by a disulfide. 3 N-linked (GlcNAc...) asparagine glycosylation sites follow: N470, N538, and N665. C490 and C543 form a disulfide bridge. Phosphoserine is present on S818. Residues 841–1005 (TPPFLAHPNV…SILMSPDSPD (165 aa)) form the GAIN-B domain. 2 disulfides stabilise this stretch: C953/C987 and C972/C989. The GPS stretch occupies residues 953–1005 (CVFWNFSLANNTGGWDSSGCSVEDDGRDNRDRVFCKCNHLTSFSILMSPDSPD). Residues 993 to 1008 (TSFSILMSPDSPDPGS) form a tethered agonist region. Residues 1020 to 1040 (IGLGFSIVSLAACLVVEAMVW) traverse the membrane as a helical segment. At 1041 to 1055 (KSVTKNRTSYMRHIC) the chain is on the cytoplasmic side. The chain crosses the membrane as a helical span at residues 1056 to 1076 (IVNIAFCLLIADIWFIVAGAI). Topologically, residues 1077 to 1092 (HDGRYPLNETACVAAT) are extracellular. Residues 1093–1113 (FFIHFFYLSVFFWMLTLGLML) traverse the membrane as a helical segment. Over 1114 to 1130 (FYRLIFILHDASKSTQK) the chain is Cytoplasmic. A helical transmembrane segment spans residues 1131–1151 (AIAFSLGYGCPLIISSITVGV). Topologically, residues 1152-1175 (TQPQEVYMRKNACWLNWEDTRALL) are extracellular. The helical transmembrane segment at 1176–1196 (AFAIPALIIVVVNVSITVVVI) threads the bilayer. At 1197 to 1221 (TKILRPSIGDKPGKQEKSSLFQISK) the chain is on the cytoplasmic side. A helical transmembrane segment spans residues 1222–1242 (SIGVLTPLLGLTWGFGLATVI). Residues 1243–1250 (QGSNAVFH) lie on the Extracellular side of the membrane. The helical transmembrane segment at 1251–1271 (IIFTLLNAFQGLFILLFGCLW) threads the bilayer. At 1272 to 1348 (DQKVQEALLH…NSSSAYSLLN (77 aa)) the chain is on the cytoplasmic side. T1302 is modified (phosphothreonine). Phosphoserine is present on S1309. The tract at residues 1328 to 1348 (STPETTSSSLENSSSAYSLLN) is disordered.

It belongs to the G-protein coupled receptor 2 family. Adhesion G-protein coupled receptor (ADGR) subfamily. In terms of assembly, homodimer; disulfide-linked. Heterodimer of 2 chains generated by proteolytic processing; the large extracellular N-terminal fragment and the membrane-bound C-terminal fragment predominantly remain associated and non-covalently linked. Fragment generates by the processing enzyme furin remains attached to the extracellular N-terminal fragment. Interacts (via N-terminal extracellular domain) with SFTPD. Post-translationally, highly glycosylated. In terms of processing, proteolytically cleaved at multiple sites: one in the GPS region of the GAIN-B domain (S1 site) and the other in the SEA domain (S2 site). The proteolytic cleavage at S1 site generates an extracellular subunit and a seven-transmembrane subunit. The proteolytic cleavage at S2 site generates a fragment that undergoes proteolytic cleavage by the processing enzyme furin. As to expression, widely expressed, with highest levels in lung, pancreas, kidney and heart. In the kidney, expressed more abundantly in the medulla than in the cortex, predominantly expressed in A-intercalated cells (at protein level). Expressed in endothelial cells from various tissues, including brain, heart, kidney, liver, lung and muscle. In the lung, expressed in alveolar type II (ATII) cells (at protein level). Expressed in pancreatic islets of Langerhans, predominantly in delta cells, as well as in endothelial cells. Expressed in white adipose tissue.

It is found in the cell membrane. Its activity is regulated as follows. As an adhesion G protein-coupled receptor (aGPCR) exhibits a large N-terminal extracellular domain containing highly conserved GPCR autoproteolysis-inducing (GAIN) domain. During synthesis, intracellular autoproteolytic processing of nascent chain within the GAIN domain generates a mature protein, consisting of an N-terminal fragment that is non-covalently linked to the C-terminal fragment. The mature protein is routed to the plasma membrane where the N- and C-terminal fragments remain associated, forming the holoreceptor. Dissociation of the aGPCR fragments stimulates G protein signaling through the action of the tethered-peptide agonist stalk that is occluded within the GAIN domain in the holoreceptor form. This dissociation might be induced by ligand binding, such as that of sFNDC4. Adhesion G protein-coupled receptor. In alveolar type II (ATII or AT2) cells, required for normal lung surfactant homeostasis. Modulation of both surfactant secretion and uptake by ATII cells is mediated by the downstream activation of GNAQ/GNA11 proteins and may be a consequence of increased cortical F-actin assembly induced by ADGRF5 activation. In the kidney, may play a role in the regulation of acid excretion into the primary urine, possibly by regulating the surface expression of V-ATPase proton pump. As a receptor for soluble FNDC4 (sFNDC4), required for proper systemic glucose tolerance, specifically sensitizing white adipose tissue to insulin. Also plays a role in sFNDC4-induced decrease of local inflammation in white adipose tissue. The protein is Adhesion G protein-coupled receptor F5 (Adgrf5) of Mus musculus (Mouse).